The following is a 63-amino-acid chain: Alpha-conotoxin-like PuSG1.2 (63 aa).

A signal peptide spans 1–21 (MRCLALLVVTLLLFTATATTG). The propeptide occupies 22–43 (ASNGMNAAASGEAPDSISLAVR). Disulfide bonds link Cys-46/Cys-52 and Cys-47/Cys-60. A lacks the Ser-Xaa-Pro motif that is crucial for potent interaction with nAChR region spans residues 48 to 50 (PDP).

This sequence belongs to the conotoxin A superfamily. Expressed by the salivary gland.

It is found in the secreted. Alpha-conopeptides-like may act on postsynaptic membranes, they bind to the nicotinic acetylcholine receptors (nAChR) and thus inhibit them. Has possibly a distinct nAChR binding mode from other alpha-conotoxins, due to a different three residue motif (lacks the Ser-Xaa-Pro motif). This chain is Alpha-conotoxin-like PuSG1.2, found in Conus pulicarius (Flea-bitten cone).